The sequence spans 429 residues: Ribosomal RNA small subunit methyltransferase B (429 aa).

S-adenosyl-L-methionine is bound by residues 254–260, Asp-277, Asp-303, and Asp-322; that span reads CAAPGGK. The active-site Nucleophile is the Cys-375.

This sequence belongs to the class I-like SAM-binding methyltransferase superfamily. RsmB/NOP family.

Its subcellular location is the cytoplasm. It carries out the reaction cytidine(967) in 16S rRNA + S-adenosyl-L-methionine = 5-methylcytidine(967) in 16S rRNA + S-adenosyl-L-homocysteine + H(+). In terms of biological role, specifically methylates the cytosine at position 967 (m5C967) of 16S rRNA. The polypeptide is Ribosomal RNA small subunit methyltransferase B (Escherichia coli O6:H1 (strain CFT073 / ATCC 700928 / UPEC)).